Here is a 371-residue protein sequence, read N- to C-terminus: Peptide chain release factor 2 (371 aa).

N5-methylglutamine is present on glutamine 253.

The protein belongs to the prokaryotic/mitochondrial release factor family. Post-translationally, methylated by PrmC. Methylation increases the termination efficiency of RF2.

It localises to the cytoplasm. Functionally, peptide chain release factor 2 directs the termination of translation in response to the peptide chain termination codons UGA and UAA. This is Peptide chain release factor 2 (prfB) from Mycobacterium bovis (strain ATCC BAA-935 / AF2122/97).